Reading from the N-terminus, the 279-residue chain is Energy-coupling factor transporter ATP-binding protein EcfA1 (279 aa).

An ABC transporter domain is found at 6 to 240 (VRLEHVFYKY…ADAMRAIGLG (235 aa)). 40–47 (GHNGSGKS) contributes to the ATP binding site.

Belongs to the ABC transporter superfamily. Energy-coupling factor EcfA family. As to quaternary structure, forms a stable energy-coupling factor (ECF) transporter complex composed of 2 membrane-embedded substrate-binding proteins (S component), 2 ATP-binding proteins (A component) and 2 transmembrane proteins (T component).

It is found in the cell membrane. In terms of biological role, ATP-binding (A) component of a common energy-coupling factor (ECF) ABC-transporter complex. Unlike classic ABC transporters this ECF transporter provides the energy necessary to transport a number of different substrates. This is Energy-coupling factor transporter ATP-binding protein EcfA1 from Listeria innocua serovar 6a (strain ATCC BAA-680 / CLIP 11262).